We begin with the raw amino-acid sequence, 1031 residues long: MMS19 nucleotide excision repair protein homolog (1031 aa).

An N-acetylalanine modification is found at A2. HEAT repeat units follow at residues 867–905 (QRFFTDNVPALVQGFHAAPQDVKPNYLKGLSHVLNRLPK), 909–947 (LPELPTLLSLLLEALSCPDSVVQLSTLSCLQPLLLEAPQ), 950–988 (SLHVDTLVTKFLNLSSSYSMAVRIAALQCMHALTRLPTS), and 991–1029 (LPYKSQVIRALAKPLDDKKRLVRKEAVSARGEWFLLGSP). The residue at position 1028 (S1028) is a Phosphoserine.

The protein belongs to the MET18/MMS19 family. Component of the CIA complex. In the CIA complex, interacts directly with CIAO2B and CIAO3. Component of the MMXD complex, composed of CIAO1, ERCC2, CIAO2B, MMS19 and SLC25A5. Interacts with CIAO2B; the interaction is direct. Interacts with ERCC2/XPD; the interaction is direct. Interacts with ERCC3/XPB and NCOA3/RAC3. Interacts with RTEL1; the interaction mediates the association of RTEL1 with the CIA complex. Interacts with BRIP1. Interacts with KIF4A; the interaction facilitates the transfer of Fe-S clusters to KIF4A to ensure proper localization of KIF4A to the mitotic machinery components. Interacts with CCDC117; the interaction is indirect. In terms of processing, ubiquitinated; undergoes 'Lys-48'-linked polyubiquitination. As to expression, ubiquitously expressed with higher expression in testis.

The protein localises to the nucleus. Its subcellular location is the cytoplasm. It localises to the cytoskeleton. It is found in the spindle. Key component of the cytosolic iron-sulfur protein assembly (CIA) complex, a multiprotein complex that mediates the incorporation of iron-sulfur cluster into apoproteins specifically involved in DNA metabolism and genomic integrity. In the CIA complex, MMS19 acts as an adapter between early-acting CIA components and a subset of cellular target Fe/S proteins such as ERCC2/XPD, FANCJ and RTEL1, thereby playing a key role in nucleotide excision repair (NER), homologous recombination-mediated double-strand break DNA repair, DNA replication and RNA polymerase II (POL II) transcription. As a CIA complex component and in collaboration with CIAO1 and CIAO2, binds to and facilitates the assembly of most cytosolic-nuclear Fe/S proteins. As part of the mitotic spindle-associated MMXD complex, plays a role in chromosome segregation, probably by facilitating iron-sulfur cluster assembly into ERCC2/XPD. Together with CIAO2, facilitates the transfer of Fe-S clusters to the motor protein KIF4A, which ensures proper localization of KIF4A to mitotic machinery components to promote the progression of mitosis. Indirectly acts as a transcriptional coactivator of estrogen receptor (ER), via its role in iron-sulfur insertion into some component of the TFIIH-machinery. The protein is MMS19 nucleotide excision repair protein homolog of Mus musculus (Mouse).